Reading from the N-terminus, the 238-residue chain is Large ribosomal subunit protein uL1 (238 aa).

The protein belongs to the universal ribosomal protein uL1 family. Part of the 50S ribosomal subunit.

In terms of biological role, binds directly to 23S rRNA. The L1 stalk is quite mobile in the ribosome, and is involved in E site tRNA release. Protein L1 is also a translational repressor protein, it controls the translation of the L11 operon by binding to its mRNA. In Beutenbergia cavernae (strain ATCC BAA-8 / DSM 12333 / CCUG 43141 / JCM 11478 / NBRC 16432 / NCIMB 13614 / HKI 0122), this protein is Large ribosomal subunit protein uL1.